The sequence spans 362 residues: Phosphoserine aminotransferase (362 aa).

L-glutamate is bound by residues Ser-9 and Arg-42. Pyridoxal 5'-phosphate-binding positions include 76 to 77, Trp-102, Thr-153, Asp-174, and Gln-197; that span reads GR. Lys-198 bears the N6-(pyridoxal phosphate)lysine mark. Pyridoxal 5'-phosphate is bound at residue 239–240; that stretch reads NT.

It belongs to the class-V pyridoxal-phosphate-dependent aminotransferase family. SerC subfamily. As to quaternary structure, homodimer. The cofactor is pyridoxal 5'-phosphate.

Its subcellular location is the cytoplasm. It catalyses the reaction O-phospho-L-serine + 2-oxoglutarate = 3-phosphooxypyruvate + L-glutamate. The catalysed reaction is 4-(phosphooxy)-L-threonine + 2-oxoglutarate = (R)-3-hydroxy-2-oxo-4-phosphooxybutanoate + L-glutamate. Its pathway is amino-acid biosynthesis; L-serine biosynthesis; L-serine from 3-phospho-D-glycerate: step 2/3. It participates in cofactor biosynthesis; pyridoxine 5'-phosphate biosynthesis; pyridoxine 5'-phosphate from D-erythrose 4-phosphate: step 3/5. Its function is as follows. Catalyzes the reversible conversion of 3-phosphohydroxypyruvate to phosphoserine and of 3-hydroxy-2-oxo-4-phosphonooxybutanoate to phosphohydroxythreonine. The polypeptide is Phosphoserine aminotransferase (Salmonella newport (strain SL254)).